A 619-amino-acid polypeptide reads, in one-letter code: Polyadenylate-binding protein 1-like (619 aa).

4 consecutive RRM domains span residues 11–89 (ASLY…WSQR), 99–175 (GNIF…HFKS), 191–268 (TNIY…RAQK), and 294–370 (VNLY…LAQR). Residues 431 to 458 (PAPRWTSQPPRPSSAYPPGASMVRPPVV) form a disordered region. The PABC domain maps to 533-610 (QEPLTASMLA…AVAVLQAHQA (78 aa)).

The protein belongs to the polyadenylate-binding protein type-1 family. Expressed in ovary and testis. Also expressed in pancreas, liver and thymus, and at lower levels in other somatic tissues including brain and lung.

Its subcellular location is the cytoplasm. Poly(A)-binding protein involved in oocyte maturation and early embryo development. It is required for cytosolic mRNA polyadenylation and translational activation of maternally stored mRNA in oocytes. The protein is Polyadenylate-binding protein 1-like of Homo sapiens (Human).